Reading from the N-terminus, the 277-residue chain is Large ribosomal subunit protein uL2 (277 aa).

A disordered region spans residues 222–277 (GVAMNPVDHPHGGGEGRTSGGRHPVTPWGKPTKGKKTRSNKATDKFIMRSRHQRKK).

It belongs to the universal ribosomal protein uL2 family. Part of the 50S ribosomal subunit. Forms a bridge to the 30S subunit in the 70S ribosome.

One of the primary rRNA binding proteins. Required for association of the 30S and 50S subunits to form the 70S ribosome, for tRNA binding and peptide bond formation. It has been suggested to have peptidyltransferase activity; this is somewhat controversial. Makes several contacts with the 16S rRNA in the 70S ribosome. This Brucella canis (strain ATCC 23365 / NCTC 10854 / RM-666) protein is Large ribosomal subunit protein uL2.